The primary structure comprises 755 residues: MAGCIPEEKTYRRFLELFLGEFRGPCGGGEPEPEPEPEPEPEPESEPEPEPELVEAEAAEASVEEPGEEAATVAATEEGDQEQDPEPEEEAAVEGEEEEEGAATAAAAPGHSAVPPPPPQLPPLPPLPRPLSERITREEVEGESLDLCLQQLYKYNCPSFLAAALARATSDEVLQSDLSAHYIPKETDGTEGTVEIETVKLARSVFSKLHEICCSWVKDFPLRRRPQLYYETSIHAIKNMRRKMEDKHVCIPDFNMLFNLEDQEEQAYFAVFDGHGGVDAAIYASIHLHVNLVRQEMFPHDPAEALCRAFRVTDERFVQKAARESLRCGTTGVVTFIRGNMLHVAWVGDSQVMLVRKGQAVELMKPHKPDREDEKQRIEALGGCVVWFGAWRVNGSLSVSRAIGDAEHKPYICGDADSASTVLDGTEDYLILACDGFYDTVNPDEAVKVVSDHLKENNGDSSMVAHKLVASARDAGSSDNITVIVVFLRDMNKAVNVSEESDWTENSFQGGQEDGGDDKENHGECKRPWPQHQCSAPADLGYDGRVDSFTDRTSLSPGSQINVLEDPGYLDLTQIEASKPHSAQFLLPVEMFGPGAPKKANLINELMMEKKSVQSSLPEWSGAGEFPTAFNLGSTGEQIYRMQSLSPVCSGLENEQFKSPGNRVSRLSHLRHHYSKKWHRFRFNPKFYSFLSAQEPSHKIGTSLSSLTGSGKRNRIRSSLPWRQNSWKGYSENMRKLRKTHDIPCPDLPWSYKIE.

Positions 21–131 (EFRGPCGGGE…PPLPPLPRPL (111 aa)) are disordered. Repeat copies occupy residues 31-32 (PE), 33-34 (PE), 35-36 (PE), 37-38 (PE), 39-40 (PE), 41-42 (PE), and 43-44 (PE). The 11 X 2 AA tandem repeats of P-E stretch occupies residues 31-52 (PEPEPEPEPEPEPESEPEPEPE). Acidic residues-rich tracts occupy residues 31-68 (PEPE…EPGE) and 77-101 (EEGD…EEEG). The stretch at 45 to 46 (SE) is one 8; approximate repeat. 3 consecutive repeat copies span residues 47 to 48 (PE), 49 to 50 (PE), and 51 to 52 (PE). Residues 102-113 (AATAAAAPGHSA) are compositionally biased toward low complexity. Pro residues predominate over residues 114–129 (VPPPPPQLPPLPPLPR). The 258-residue stretch at 231-488 (ETSIHAIKNM…DNITVIVVFL (258 aa)) folds into the PPM-type phosphatase domain. Residues aspartate 273, glycine 274, aspartate 435, and aspartate 479 each coordinate Mn(2+). The tract at residues 498-537 (SEESDWTENSFQGGQEDGGDDKENHGECKRPWPQHQCSAP) is disordered. Over residues 518 to 527 (DKENHGECKR) the composition is skewed to basic and acidic residues. Phosphoserine is present on residues serine 535 and serine 548.

It belongs to the PP2C family. As to quaternary structure, heterotrimer. Interacts with PAX1 and ARHGEF6 (or ARHGEF7). The cofactor is Mg(2+). Mn(2+) is required as a cofactor.

The protein localises to the nucleus. It is found in the cytoplasm. The enzyme catalyses O-phospho-L-seryl-[protein] + H2O = L-seryl-[protein] + phosphate. The catalysed reaction is O-phospho-L-threonyl-[protein] + H2O = L-threonyl-[protein] + phosphate. Protein phosphatase that inactivates multifunctional CaM kinases such as CAMK4 and CAMK2. Dephosphorylates and inactivates PAK. May play a role in the inhibition of actin fiber stress breakdown and in morphological changes driven by TNK2/CDC42. Dephosphorylates PRKAA2. In Homo sapiens (Human), this protein is Protein phosphatase 1E (PPM1E).